We begin with the raw amino-acid sequence, 185 residues long: Ribosome-recycling factor (185 aa).

The tract at residues 143–163 (EKEKLISEDDNKKGMDDIQKE) is disordered.

The protein belongs to the RRF family.

Its subcellular location is the cytoplasm. Its function is as follows. Responsible for the release of ribosomes from messenger RNA at the termination of protein biosynthesis. May increase the efficiency of translation by recycling ribosomes from one round of translation to another. In Syntrophomonas wolfei subsp. wolfei (strain DSM 2245B / Goettingen), this protein is Ribosome-recycling factor.